Reading from the N-terminus, the 235-residue chain is Phosphoribosylaminoimidazole-succinocarboxamide synthase (235 aa).

Belongs to the SAICAR synthetase family.

The catalysed reaction is 5-amino-1-(5-phospho-D-ribosyl)imidazole-4-carboxylate + L-aspartate + ATP = (2S)-2-[5-amino-1-(5-phospho-beta-D-ribosyl)imidazole-4-carboxamido]succinate + ADP + phosphate + 2 H(+). It participates in purine metabolism; IMP biosynthesis via de novo pathway; 5-amino-1-(5-phospho-D-ribosyl)imidazole-4-carboxamide from 5-amino-1-(5-phospho-D-ribosyl)imidazole-4-carboxylate: step 1/2. This is Phosphoribosylaminoimidazole-succinocarboxamide synthase from Streptococcus thermophilus (strain ATCC BAA-491 / LMD-9).